A 206-amino-acid polypeptide reads, in one-letter code: Triafestin-1 (206 aa).

An N-terminal signal peptide occupies residues 1–18 (MKTILAVIFFGILAFAFA). N-linked (GlcNAc...) asparagine glycosylation is present at Asn-55.

The protein belongs to the calycin superfamily. Triabin family. As to quaternary structure, interacts with host coagulation factor XII (F12) (inactive and activated) (via amino acids 1-77). Interacts with host high molecular weight kininogen (KNG1) (via amino acids 402-532). In terms of tissue distribution, salivary gland (at protein level).

It is found in the secreted. Its activity is regulated as follows. Zn(2+) modulates binding to host coagulation factor XII (F12) and high molecular weight kininogen (KNG1). Its function is as follows. Suppresses activation of the host plasma kallikrein-kinin system, leading to inhibition of the intrinsic coagulation pathway. Blocks host coagulation factor XII (F12) and prekallikrein (KLKB1) reciprocal activation without affecting their amidolytic activities. Blocks binding of host F12 and high molecular weight kininogen (KNG1) to negatively charged surfaces. Attenuates generation of bradykinin by interfering with activation of host kallikrein-kinin system. This chain is Triafestin-1, found in Triatoma infestans (Assassin bug).